Consider the following 561-residue polypeptide: Cation diffusion facilitator family protein 1 (561 aa).

The segment covering 1 to 20 (MEVTMEDRSVKADKADRDDN) has biased composition (basic and acidic residues). The tract at residues 1-26 (MEVTMEDRSVKADKADRDDNNTTSTE) is disordered. The Cytoplasmic segment spans residues 1–112 (MEVTMEDRSV…SESVKGVSRS (112 aa)). A helical membrane pass occupies residues 113–133 (LIIQIGMTVIFCALEFITGVV). Over 134 to 136 (CSS) the chain is Extracellular. Residues 137 to 157 (IAMLADSYHMAADVMALIVAF) form a helical membrane-spanning segment. The Cytoplasmic portion of the chain corresponds to 158-176 (TCIKIATRPSTRLGYGWVR). A helical membrane pass occupies residues 177–197 (AETLGGFFNGIFMCTVCVLVF). Residues 198–215 (QEAVGRIINVHMITHPLQ) are Extracellular-facing. Residues 216 to 236 (VLVIGFIGLLINLFGMFNLSG) form a helical membrane-spanning segment. Residues 237-391 (HGHSHGGGSH…NVNIHGVWLH (155 aa)) lie on the Cytoplasmic side of the membrane. The segment at 240–304 (SHGGGSHGHS…HTRLNGKFRS (65 aa)) is disordered. The tract at residues 246-270 (HGHSHGGSHGHSHNNKKTKKNDGHG) is 6 X 2 AA approximate repeats of H-G. Positions 247-264 (GHSHGGSHGHSHNNKKTK) are enriched in basic residues. The helical transmembrane segment at 392–412 (LLSDAFGSVIVMISAGFVYFL) threads the bilayer. At 413 to 420 (PTWKIAAY) the chain is on the extracellular side. The helical transmembrane segment at 421 to 441 (LDPILSISLASIMGFTAVVLV) threads the bilayer. Over 442 to 561 (KTSGEKLLKQ…SVSTENEITE (120 aa)) the chain is Cytoplasmic.

This sequence belongs to the cation diffusion facilitator (CDF) transporter (TC 2.A.4) family. SLC30A subfamily. Interacts with lin-45 in a zinc-dependent manner. Expressed in intestinal cells. Expressed in the vulva.

It localises to the basolateral cell membrane. Its function is as follows. Involved in the regulation of Pn.p cell fate determination. Involved in zinc metabolism and the decrease of the cytosolic zinc concentration which is thought to modulate Ras signaling. Involved in zinc transport from the intestinal lumen to the pseudocoelum. The polypeptide is Cation diffusion facilitator family protein 1 (cdf-1) (Caenorhabditis elegans).